Reading from the N-terminus, the 144-residue chain is Putative pre-16S rRNA nuclease (144 aa).

Belongs to the YqgF nuclease family.

It localises to the cytoplasm. Could be a nuclease involved in processing of the 5'-end of pre-16S rRNA. The sequence is that of Putative pre-16S rRNA nuclease from Lactiplantibacillus plantarum (strain ATCC BAA-793 / NCIMB 8826 / WCFS1) (Lactobacillus plantarum).